Reading from the N-terminus, the 83-residue chain is RNA-binding protein Hfq (83 aa).

Residues 9 to 68 enclose the Sm domain; the sequence is DPFLNALRKERIPVSIYLVNGIKLQGQVESFDQFVILLKNTVSQMVYKHAISTVVPSRAL.

It belongs to the Hfq family. In terms of assembly, homohexamer.

Its function is as follows. RNA chaperone that binds small regulatory RNA (sRNAs) and mRNAs to facilitate mRNA translational regulation in response to envelope stress, environmental stress and changes in metabolite concentrations. Also binds with high specificity to tRNAs. The protein is RNA-binding protein Hfq of Pseudoalteromonas atlantica (strain T6c / ATCC BAA-1087).